An 890-amino-acid chain; its full sequence is MTDVTIKTLAAERQTSVERLVQQFADAGIRKSADDSVSAQEKQTLIDHLNQKNSGPDKLTLQRKTRSTLNIPGTGGKSKSVQIEVRKKRTFVKRDPQEAERLAAEEQAQREAEEQARREAEESAKREAQQKAEREAAEQAKREAAEQAKREAAEKDKVSNQQDDMTKNAQAEKARREQEAAELKRKAEEEARRKLEEEARRVAEEARRMAEENKWTDNAEPTEDSSDYHVTTSQHARQAEDESDREVEGGRGRGRNAKAARPKKGNKHSESKADREEARAAVRGGKGGKRKGSSLQQGFQKPAQAVNRDVVIGETITVGELANKMAVKGSQVIKAMMKLGAMATINQVIDQETAQLVAEEMGHKVILRRENELEEAVMSDRDTGAAAEPRAPVVTIMGHVDHGKTSLLDYIRSTKVASGEAGGITQHIGAYHVETENGMITFLDTPGHAAFTSMRARGAQATDIVVLVVAADDGVMPQTIEAIQHAKAAGVPVVVAVNKIDKPEADPDRVKNELSQYGILPEEWGGESQFVHVSAKAGTGIDELLDAILLQAEVLELKAVRKGMASGAVIESFLDKGRGPVATVLVREGTLHKGDIVLCGFEYGRVRAMRNEMGQEVLEAGPSIPVEILGLSGVPAAGDEVTVVRDEKKAREVALYRQGKFREVKLARQQKSKLENMFANMTEGEVHEVNIVLKADVQGSVEAISDSLLKLSTDEVKVKIIGSGVGGITETDATLAAASNAILVGFNVRADASARKVIEAESLDLRYYSVIYNLIDEVKAAMSGMLSPELKQQIIGLAEVRDVFKSPKFGAIAGCMVTEGVVKRHNPIRVLRDNVVIYEGELESLRRFKDDVNEVRNGMECGIGVKNYNDVRTGDVIEVFEIIEIQRTIA.

A disordered region spans residues 45–304; that stretch reads LIDHLNQKNS…LQQGFQKPAQ (260 aa). The span at 67-81 shows a compositional bias: polar residues; the sequence is STLNIPGTGGKSKSV. Positions 92–217 are enriched in basic and acidic residues; the sequence is VKRDPQEAER…RMAEENKWTD (126 aa). Basic residues predominate over residues 252 to 266; the sequence is GRGRNAKAARPKKGN. The span at 267–280 shows a compositional bias: basic and acidic residues; it reads KHSESKADREEARA. Positions 389 to 558 constitute a tr-type G domain; it reads PRAPVVTIMG…LLQAEVLELK (170 aa). Residues 398–405 are G1; that stretch reads GHVDHGKT. Position 398 to 405 (398 to 405) interacts with GTP; the sequence is GHVDHGKT. The G2 stretch occupies residues 423-427; it reads GITQH. A G3 region spans residues 444-447; sequence DTPG. GTP-binding positions include 444-448 and 498-501; these read DTPGH and NKID. The interval 498–501 is G4; it reads NKID. The segment at 534–536 is G5; sequence SAK. Lys808 is subject to N6-acetyllysine.

It belongs to the TRAFAC class translation factor GTPase superfamily. Classic translation factor GTPase family. IF-2 subfamily.

Its subcellular location is the cytoplasm. One of the essential components for the initiation of protein synthesis. Protects formylmethionyl-tRNA from spontaneous hydrolysis and promotes its binding to the 30S ribosomal subunits. Also involved in the hydrolysis of GTP during the formation of the 70S ribosomal complex. The protein is Translation initiation factor IF-2 of Escherichia fergusonii (strain ATCC 35469 / DSM 13698 / CCUG 18766 / IAM 14443 / JCM 21226 / LMG 7866 / NBRC 102419 / NCTC 12128 / CDC 0568-73).